A 255-amino-acid chain; its full sequence is Triosephosphate isomerase (255 aa).

9 to 11 (NWK) contributes to the substrate binding site. Histidine 95 functions as the Electrophile in the catalytic mechanism. Glutamate 167 (proton acceptor) is an active-site residue. Residues glycine 173, serine 212, and 233–234 (GG) each bind substrate.

It belongs to the triosephosphate isomerase family. As to quaternary structure, homodimer.

It localises to the cytoplasm. It carries out the reaction D-glyceraldehyde 3-phosphate = dihydroxyacetone phosphate. The protein operates within carbohydrate biosynthesis; gluconeogenesis. It participates in carbohydrate degradation; glycolysis; D-glyceraldehyde 3-phosphate from glycerone phosphate: step 1/1. Involved in the gluconeogenesis. Catalyzes stereospecifically the conversion of dihydroxyacetone phosphate (DHAP) to D-glyceraldehyde-3-phosphate (G3P). This Yersinia pseudotuberculosis serotype O:1b (strain IP 31758) protein is Triosephosphate isomerase.